A 255-amino-acid polypeptide reads, in one-letter code: tRNA (guanine-N(1)-)-methyltransferase (255 aa).

Residues Gly113 and 133 to 138 (IGDYVL) each bind S-adenosyl-L-methionine.

Belongs to the RNA methyltransferase TrmD family. Homodimer.

It is found in the cytoplasm. The enzyme catalyses guanosine(37) in tRNA + S-adenosyl-L-methionine = N(1)-methylguanosine(37) in tRNA + S-adenosyl-L-homocysteine + H(+). In terms of biological role, specifically methylates guanosine-37 in various tRNAs. This Enterobacter sp. (strain 638) protein is tRNA (guanine-N(1)-)-methyltransferase.